The following is a 167-amino-acid chain: Ribosome maturation factor RimM (167 aa).

One can recognise a PRC barrel domain in the interval 94 to 166 (TGRAYLHELI…YMVVPRFDEF (73 aa)).

This sequence belongs to the RimM family. In terms of assembly, binds ribosomal protein uS19.

The protein resides in the cytoplasm. Its function is as follows. An accessory protein needed during the final step in the assembly of 30S ribosomal subunit, possibly for assembly of the head region. Essential for efficient processing of 16S rRNA. May be needed both before and after RbfA during the maturation of 16S rRNA. It has affinity for free ribosomal 30S subunits but not for 70S ribosomes. The protein is Ribosome maturation factor RimM of Chlorobium phaeobacteroides (strain DSM 266 / SMG 266 / 2430).